Here is a 290-residue protein sequence, read N- to C-terminus: Porphobilinogen deaminase (290 aa).

S-(dipyrrolylmethanemethyl)cysteine is present on Cys237.

It belongs to the HMBS family. In terms of assembly, monomer. Dipyrromethane serves as cofactor.

The catalysed reaction is 4 porphobilinogen + H2O = hydroxymethylbilane + 4 NH4(+). It functions in the pathway porphyrin-containing compound metabolism; protoporphyrin-IX biosynthesis; coproporphyrinogen-III from 5-aminolevulinate: step 2/4. In terms of biological role, tetrapolymerization of the monopyrrole PBG into the hydroxymethylbilane pre-uroporphyrinogen in several discrete steps. This is Porphobilinogen deaminase from Clostridium botulinum (strain Kyoto / Type A2).